We begin with the raw amino-acid sequence, 213 residues long: MTHNTMLQRFNGLLEPTHLYIVSVVAYSACNRPDKISGIAKEAMEHVGPSIYPKLREALVKSSPLVGFPRTINSLREMTTNIPPPFPDEFARAADADIDTGKRGKIYFEKTYGKVTQRVLRSMQSSSLDLANIALDYAYGKVLSFNEVVSPLETSLMIIAALVPQDVNPQLRGHLKGALNHGATKEQVMSARNIALEISKECGIQFKGDIETL.

Residues 211-213 carry the Peroxisomal target signal 1 (PTS1) motif; the sequence is ETL.

The protein belongs to the PXP2 family.

It is found in the peroxisome matrix. It localises to the cytoplasm. The protein resides in the cytosol. Its subcellular location is the nucleus. Probably involved in peroxisome formation or maintenance as well as in amino acid metabolism. In Schizosaccharomyces pombe (strain 972 / ATCC 24843) (Fission yeast), this protein is Peroxisomal protein 2.